A 377-amino-acid chain; its full sequence is Pseudouridylate synthase RPUSD4, mitochondrial (377 aa).

The N-terminal 15 residues, 1 to 15, are a transit peptide targeting the mitochondrion; sequence MAAPRWSASGPWIRG. The stretch at 36–62 forms a coiled coil; it reads AASTAINAQRLAEKLRAQKREQDTKKE. Residue Asp153 is part of the active site.

It belongs to the pseudouridine synthase RluA family. As to quaternary structure, interacts with 16S mt-rRNA, mt-tRNA(Phe) and mt-tRNA(Met). Forms a regulatory protein-RNA complex, consisting of RCC1L, NGRN, RPUSD3, RPUSD4, TRUB2, FASTKD2 and 16S mt-rRNA.

It is found in the mitochondrion matrix. Its subcellular location is the nucleus. The protein localises to the cytoplasm. The enzyme catalyses uridine in 5S rRNA = pseudouridine in 5S rRNA. It carries out the reaction a uridine in tRNA = a pseudouridine in tRNA. It catalyses the reaction a uridine in mRNA = a pseudouridine in mRNA. In terms of biological role, catalyzes uridine to pseudouridine isomerization (pseudouridylation) of different mitochondrial RNA substrates. Acts on position 1397 in 16S mitochondrial ribosomal RNA (16S mt-rRNA). This modification is required for the assembly of 16S mt-rRNA into a functional mitochondrial ribosome. As a component of a functional protein-RNA module, consisting of RCC1L, NGRN, RPUSD3, RPUSD4, TRUB2, FASTKD2 and 16S mt-rRNA, controls 16S mt-rRNA abundance and is required for intra-mitochondrial translation. Acts on position 39 in mitochondrial tRNA(Phe). Also catalyzes pseudouridylation of mRNAs in nucleus: acts as a regulator of pre-mRNA splicing by mediating pseudouridylation of pre-mRNAs at locations associated with alternatively spliced regions. Pseudouridylation of pre-mRNAs near splice sites directly regulates mRNA splicing and mRNA 3'-end processing. This chain is Pseudouridylate synthase RPUSD4, mitochondrial, found in Homo sapiens (Human).